A 236-amino-acid chain; its full sequence is Small ribosomal subunit protein uS3 (236 aa).

One can recognise a KH type-2 domain in the interval 39–107 (VREFLKKKLA…PVHLNIEEVR (69 aa)). The tract at residues 215–236 (AAQPAEPEKKVRKSGAKNAATS) is disordered.

Belongs to the universal ribosomal protein uS3 family. As to quaternary structure, part of the 30S ribosomal subunit. Forms a tight complex with proteins S10 and S14.

Its function is as follows. Binds the lower part of the 30S subunit head. Binds mRNA in the 70S ribosome, positioning it for translation. This Methylobacillus flagellatus (strain ATCC 51484 / DSM 6875 / VKM B-1610 / KT) protein is Small ribosomal subunit protein uS3.